Reading from the N-terminus, the 334-residue chain is N-acetyl-gamma-glutamyl-phosphate reductase (334 aa).

Residue cysteine 154 is part of the active site.

This sequence belongs to the NAGSA dehydrogenase family. Type 1 subfamily.

The protein localises to the cytoplasm. The catalysed reaction is N-acetyl-L-glutamate 5-semialdehyde + phosphate + NADP(+) = N-acetyl-L-glutamyl 5-phosphate + NADPH + H(+). Its pathway is amino-acid biosynthesis; L-arginine biosynthesis; N(2)-acetyl-L-ornithine from L-glutamate: step 3/4. Catalyzes the NADPH-dependent reduction of N-acetyl-5-glutamyl phosphate to yield N-acetyl-L-glutamate 5-semialdehyde. The protein is N-acetyl-gamma-glutamyl-phosphate reductase of Aliivibrio fischeri (strain ATCC 700601 / ES114) (Vibrio fischeri).